A 206-amino-acid chain; its full sequence is Transmembrane emp24 domain-containing protein bai (206 aa).

An N-terminal signal peptide occupies residues 1 to 20 (MARTLLILCTLMAWAWTGEA). Topologically, residues 21-172 (VMFKLTPNTQ…RDTNEKTNSR (152 aa)) are lumenal. One can recognise a GOLD domain in the interval 30–140 (QKCLKEDIQA…LKPLEVDLKR (111 aa)). A helical membrane pass occupies residues 173 to 193 (VLFFSIFSMCCLLGLATWQVL). Residues 194–206 (YLRRYFKAKKLIE) lie on the Cytoplasmic side of the membrane.

This sequence belongs to the EMP24/GP25L family.

It localises to the membrane. Its function is as follows. Eca and bai are essential, though not redundant, for dorsoventral patterning of the embryo. Specifically required during early embryogenesis for the activity of maternal tkv, while the zygotic tkv is not affected. This is Transmembrane emp24 domain-containing protein bai from Drosophila ananassae (Fruit fly).